The primary structure comprises 340 residues: Alcohol dehydrogenase (340 aa).

2 residues coordinate Zn(2+): C40 and H63.

This sequence belongs to the zinc-containing alcohol dehydrogenase family. Zn(2+) is required as a cofactor.

The enzyme catalyses a primary alcohol + NAD(+) = an aldehyde + NADH + H(+). It catalyses the reaction a secondary alcohol + NAD(+) = a ketone + NADH + H(+). The chain is Alcohol dehydrogenase (adhA) from Rhizobium meliloti (strain 1021) (Ensifer meliloti).